The chain runs to 241 residues: Small ribosomal subunit protein uS2 (241 aa).

Belongs to the universal ribosomal protein uS2 family.

The protein is Small ribosomal subunit protein uS2 of Enterobacter sp. (strain 638).